Here is a 244-residue protein sequence, read N- to C-terminus: Orotidine 5'-phosphate decarboxylase (244 aa).

Substrate-binding positions include Asp20, Lys42, 70 to 79 (DLKFFDIPAT), Thr125, Arg186, Gln195, Gly215, and Arg216. The active-site Proton donor is the Lys72.

Belongs to the OMP decarboxylase family. Type 1 subfamily. Homodimer.

The catalysed reaction is orotidine 5'-phosphate + H(+) = UMP + CO2. The protein operates within pyrimidine metabolism; UMP biosynthesis via de novo pathway; UMP from orotate: step 2/2. Its function is as follows. Catalyzes the decarboxylation of orotidine 5'-monophosphate (OMP) to uridine 5'-monophosphate (UMP). The protein is Orotidine 5'-phosphate decarboxylase of Xylella fastidiosa (strain M23).